The chain runs to 116 residues: Probable non-functional immunoglobulin kappa variable 3-7 (116 aa).

The signal sequence occupies residues 1 to 21 (MEAPAQLLFLLLLWLPDTTRE). The framework-1 stretch occupies residues 21 to 43 (EIVMTQSPPTLSLSPGERVTLSC). In terms of domain architecture, Ig-like spans 22–116 (IVMTQSPPTL…YYCQQDYNLP (95 aa)). The cysteines at positions 43 and 109 are disulfide-linked. A complementarity-determining-1 region spans residues 44–55 (RASQSVSSSYLT). The framework-2 stretch occupies residues 56 to 70 (WYQQKPGQAPRLLIY). The segment at 71 to 77 (GASTRAT) is complementarity-determining-2. The framework-3 stretch occupies residues 78–109 (SIPARFSGSGSGTDFTLTISSLQPEDFAVYYC). The segment at 110–116 (QQDYNLP) is complementarity-determining-3.

In terms of assembly, immunoglobulins are composed of two identical heavy chains and two identical light chains; disulfide-linked.

It is found in the secreted. The protein resides in the cell membrane. Its function is as follows. Probable non-functional open reading frame (ORF) of V region of the variable domain of immunoglobulin light chains. Non-functional ORF generally cannot participate in the synthesis of a productive immunoglobulin chain due to altered V-(D)-J or switch recombination and/or splicing site (at mRNA level) and/or conserved amino acid change (protein level). Immunoglobulins, also known as antibodies, are membrane-bound or secreted glycoproteins produced by B lymphocytes. In the recognition phase of humoral immunity, the membrane-bound immunoglobulins serve as receptors which, upon binding of a specific antigen, trigger the clonal expansion and differentiation of B lymphocytes into immunoglobulins-secreting plasma cells. Secreted immunoglobulins mediate the effector phase of humoral immunity, which results in the elimination of bound antigens. The antigen binding site is formed by the variable domain of one heavy chain, together with that of its associated light chain. Thus, each immunoglobulin has two antigen binding sites with remarkable affinity for a particular antigen. The variable domains are assembled by a process called V-(D)-J rearrangement and can then be subjected to somatic hypermutations which, after exposure to antigen and selection, allow affinity maturation for a particular antigen. The polypeptide is Probable non-functional immunoglobulin kappa variable 3-7 (Homo sapiens (Human)).